Consider the following 227-residue polypeptide: uncharacterized protein (227 aa).

2 helical membrane passes run 7–24 and 135–157; these read FVYA…VTWA and VVVI…LMCL.

It belongs to the TMEM9 family.

The protein localises to the membrane. This is an uncharacterized protein from Drosophila melanogaster (Fruit fly).